Here is a 329-residue protein sequence, read N- to C-terminus: Serpentine receptor class alpha-6 (329 aa).

Helical transmembrane passes span 26 to 46 (VDLL…KIVI), 68 to 88 (LYQI…FFML), 104 to 124 (YFKV…GLLI), 143 to 163 (IGVC…FIIL), 187 to 207 (NLFS…SIFI), 238 to 258 (ICFL…GILI), and 273 to 293 (FWIA…VLLI).

It belongs to the nematode receptor-like protein sra family.

The protein resides in the membrane. This is Serpentine receptor class alpha-6 (sra-6) from Caenorhabditis elegans.